An 84-amino-acid chain; its full sequence is UPF0386 protein NGR_c10980 (84 aa).

Belongs to the UPF0386 family.

In Sinorhizobium fredii (strain NBRC 101917 / NGR234), this protein is UPF0386 protein NGR_c10980.